We begin with the raw amino-acid sequence, 719 residues long: DNA ligase (719 aa).

NAD(+)-binding positions include 42-46 (DAAYD), 92-93 (SL), and E126. The active-site N6-AMP-lysine intermediate is K128. Residues R149, E185, K301, and K325 each coordinate NAD(+). Residues C430, C433, C448, and C454 each contribute to the Zn(2+) site. One can recognise a BRCT domain in the interval 640–719 (ATGSPVEGKT…DDWFKLVGED (80 aa)).

This sequence belongs to the NAD-dependent DNA ligase family. LigA subfamily. The cofactor is Mg(2+). Requires Mn(2+) as cofactor.

It catalyses the reaction NAD(+) + (deoxyribonucleotide)n-3'-hydroxyl + 5'-phospho-(deoxyribonucleotide)m = (deoxyribonucleotide)n+m + AMP + beta-nicotinamide D-nucleotide.. Its function is as follows. DNA ligase that catalyzes the formation of phosphodiester linkages between 5'-phosphoryl and 3'-hydroxyl groups in double-stranded DNA using NAD as a coenzyme and as the energy source for the reaction. It is essential for DNA replication and repair of damaged DNA. This Brucella melitensis biotype 2 (strain ATCC 23457) protein is DNA ligase.